We begin with the raw amino-acid sequence, 488 residues long: UDP-glycosyltransferase 85A3 (488 aa).

UDP-alpha-D-glucose contacts are provided by residues S306, 363-365 (CPQ), 380-388 (HCGWNSTLE), and 402-405 (FAEQ).

This sequence belongs to the UDP-glycosyltransferase family. As to expression, expressed in roots and flowers.

The sequence is that of UDP-glycosyltransferase 85A3 (UGT85A3) from Arabidopsis thaliana (Mouse-ear cress).